A 343-amino-acid polypeptide reads, in one-letter code: Tumor necrosis factor receptor superfamily member wgn (343 aa).

Disordered stretches follow at residues 1-44 and 74-96; these read MMPP…IGGS and SSAA…SIAS. The first 76 residues, 1 to 76, serve as a signal peptide directing secretion; the sequence is MMPPRLPGGH…ATSASSSSSA (76 aa). The span at 13–24 shows a compositional bias: low complexity; it reads AMRSRSSSSGHH. A compositionally biased stretch (basic residues) spans 29–39; it reads FHKRRRRRQQH. The Extracellular portion of the chain corresponds to 77–201; the sequence is ANTDIAPPDP…AAWVLDWQTG (125 aa). The TNFR-Cys repeat unit spans residues 99-137; that stretch reads PCAPQHWWDSQRDRCTPCTRCQGEMIPLRPCQLHTDTIC. 3 cysteine pairs are disulfide-bonded: Cys100/Cys113, Cys116/Cys129, and Cys119/Cys137. Residues 202–222 traverse the membrane as a helical segment; the sequence is VLYVAVLTCLVFFSVAACILI. Topologically, residues 223 to 343 are cytoplasmic; the sequence is HHMRQWRRME…GVRGCSGLKG (121 aa). The stretch at 225-257 forms a coiled coil; that stretch reads MRQWRRMERRLDQDVEELSTKLMAKLAEVQSLD.

Monomer. Interacts (via extracellular cystein-rich domain) with egr (via secreted TNF-homology soluble form); forms heterohexamers when 3 copies associate with egr trimers. Interacts with Traf6. Interacts with Moe. Expressed in the adult midgut; under normal conditions expressed at higher levels than the other TNF receptor grnd.

The protein resides in the cell membrane. Its subcellular location is the cytoplasmic vesicle membrane. Functionally, receptor for egr. Involved in induction of apoptosis by triggering JNK signaling. Mediates the tumor suppressor activity of egr which eliminates oncogenic cells from epithelia, thereby maintaining epithelial integrity. Following UV-induced epidermal damage, binds to egr released from apoptotic epidermal cells and plays a role in development of thermal allodynia, a responsiveness to subthreshold thermal stimuli which are not normally perceived as noxious. Together with Moe, involved in control of axon targeting of R8 and R2-R5 photoreceptors, independent of egr. The chain is Tumor necrosis factor receptor superfamily member wgn from Drosophila melanogaster (Fruit fly).